Here is a 717-residue protein sequence, read N- to C-terminus: Polyribonucleotide nucleotidyltransferase (717 aa).

Mg(2+) contacts are provided by D488 and D494. The region spanning 555-614 (PRIEVMNIPVDKIREVIGSGGKVIREIVEKTGAKINIEDDGTVKIASSSGKEIEAARKWI) is the KH domain. Positions 624 to 692 (GQIYEGTVVK…ERGKVRLSMK (69 aa)) constitute an S1 motif domain.

It belongs to the polyribonucleotide nucleotidyltransferase family. Mg(2+) is required as a cofactor.

Its subcellular location is the cytoplasm. The catalysed reaction is RNA(n+1) + phosphate = RNA(n) + a ribonucleoside 5'-diphosphate. Involved in mRNA degradation. Catalyzes the phosphorolysis of single-stranded polyribonucleotides processively in the 3'- to 5'-direction. The polypeptide is Polyribonucleotide nucleotidyltransferase (Sinorhizobium fredii (strain NBRC 101917 / NGR234)).